A 35-amino-acid polypeptide reads, in one-letter code: MAWTAPKLREVNCGMEINMYAPAEDEGGRGTDPIL.

Positions 16-20 form a cross-link, pyrroloquinoline quinone (Glu-Tyr); that stretch reads EINMY.

This sequence belongs to the PqqA family.

Its pathway is cofactor biosynthesis; pyrroloquinoline quinone biosynthesis. Functionally, required for coenzyme pyrroloquinoline quinone (PQQ) biosynthesis. PQQ is probably formed by cross-linking a specific glutamate to a specific tyrosine residue and excising these residues from the peptide. This is Coenzyme PQQ synthesis protein A from Ruegeria pomeroyi (strain ATCC 700808 / DSM 15171 / DSS-3) (Silicibacter pomeroyi).